A 519-amino-acid polypeptide reads, in one-letter code: Lysine histidine transporter-like 8 (519 aa).

The disordered stretch occupies residues 1-44 (MDERPETELISIPATPRVSTPEILTPSGQRSPRPATKPSSATWT). Topologically, residues 1–114 (MDERPETELI…NLNAGVGFQA (114 aa)) are cytoplasmic. 2 helical membrane-spanning segments follow: residues 115 to 135 (LVLPVAFAFLGWSWGILSLTI) and 136 to 156 (AYCWQLYTLWILVQLHEAVPG). The Cytoplasmic segment spans residues 157 to 176 (KRYNRYVELAQAAFGERLGV). Residues 177-197 (WLALFPTVYLSAGTATALILI) traverse the membrane as a helical segment. The Extracellular segment spans residues 198-217 (GGETMKLFFQIVCGPLCTSN). Residues 218 to 238 (PLTTVEWYLVFTSLCIVLSQL) traverse the membrane as a helical segment. Residues 239–243 (PNLNS) lie on the Cytoplasmic side of the membrane. The helical transmembrane segment at 244 to 264 (IAGLSLIGAVTAITYSTMVWV) threads the bilayer. Residues 265 to 282 (LSVSQPRPATISYEPLSM) lie on the Extracellular side of the membrane. Residues 283-303 (PSTSGSLFAVLNALGIIAFAF) form a helical membrane-spanning segment. Over 304–333 (RGHNLVLEIQSTMPSTFKHPAHVPMWRGAK) the chain is Cytoplasmic. A helical membrane pass occupies residues 334 to 354 (ISYFLIALCIFPISIGGFWAY). Topologically, residues 355–377 (GNLMPSGGMLAALYAFHIHDIPR) are extracellular. The chain crosses the membrane as a helical span at residues 378-398 (GLLATAFLLVVFSCLSSFQIY). Residues 399 to 427 (SMPAFDSFEAGYTSRTNKPCSIWVRSGFR) lie on the Cytoplasmic side of the membrane. The helical transmembrane segment at 428 to 448 (VFFGFVSFFIGVALPFLSSLA) threads the bilayer. Position 449 (Gly449) is a topological domain, extracellular. Residues 450–470 (LLGGLTLPVTFAYPCFMWVLI) form a helical membrane-spanning segment. At 471–485 (KKPAKYSFNWYFHWG) the chain is on the cytoplasmic side. The chain crosses the membrane as a helical span at residues 486–506 (LGWLGVAFSLAFSIGGIWSMV). Residues 507-519 (TNGLKLKFFKPPN) are Extracellular-facing.

The protein belongs to the amino acid/polyamine transporter 2 family. Amino acid/auxin permease (AAAP) (TC 2.A.18.2) subfamily.

Its subcellular location is the cell membrane. Functionally, amino acid transporter. The sequence is that of Lysine histidine transporter-like 8 (AATL1) from Arabidopsis thaliana (Mouse-ear cress).